A 147-amino-acid polypeptide reads, in one-letter code: MKVILLKDVKSLGKKGDLVNASDGYARNYLIPKKLAEQATENNVHILNNKKEAERRQKLKELEEAQKLAKSLMGKEIKFKVKIGENGRLFGSITSKDISEKLKEQYNMDIDKKKIVAETIRQTGVYEAEIKIYPEVSTKVKVSVLEE.

The protein belongs to the bacterial ribosomal protein bL9 family.

Its function is as follows. Binds to the 23S rRNA. The protein is Large ribosomal subunit protein bL9 of Clostridium botulinum (strain 657 / Type Ba4).